The primary structure comprises 398 residues: Cytochrome b561 and DOMON domain-containing protein At3g61750 (398 aa).

The N-terminal stretch at Met1–Ala23 is a signal peptide. The DOMON domain occupies Asn64–Ser177. The 194-residue stretch at Leu184 to Ile377 folds into the Cytochrome b561 domain. Position 220 (His220) interacts with heme b. The next 2 membrane-spanning stretches (helical) occupy residues Val222–Leu242 and Leu252–Ile272. Positions 253 and 285 each coordinate heme b. The next 3 membrane-spanning stretches (helical) occupy residues Gly287 to Pro307, Tyr320 to Ile340, and Lys351 to Phe371. Position 321 (His321) interacts with heme b.

It depends on heme b as a cofactor.

The protein localises to the membrane. Its function is as follows. May act as a catecholamine-responsive trans-membrane electron transporter. The polypeptide is Cytochrome b561 and DOMON domain-containing protein At3g61750 (Arabidopsis thaliana (Mouse-ear cress)).